Here is a 1403-residue protein sequence, read N- to C-terminus: Centrosomal protein of 162 kDa (1403 aa).

The interval 20–46 is disordered; that stretch reads LSDDSFENSNKTPRQPNEDNKEMKKKD. Over residues 35 to 46 the composition is skewed to basic and acidic residues; that stretch reads PNEDNKEMKKKD. Serine 160 and serine 163 each carry phosphoserine. Disordered stretches follow at residues 169–243, 256–292, 306–348, and 453–606; these read LHRY…MLAN, VGLSSQEKATPKAKAPPEITDDGPAETGVPYGQSSGD, SLGD…ESDL, and NPSL…GGNR. Residues 178-208 show a composition bias toward acidic residues; sequence PAEDGCENESEQEELPETYSDDFEDAEDADD. A compositionally biased stretch (basic and acidic residues) spans 210–238; it reads LITKDEETHPKENSESGKDSFPKQEEEKT. The span at 485–500 shows a compositional bias: basic residues; sequence PCKKARSTPSLPKRKP. Composition is skewed to basic and acidic residues over residues 526–536 and 571–585; these read LEKKTSKDNTK and PHREGSPATPKRPED. Residues 614-1124 adopt a coiled-coil conformation; it reads KRAQDAEEKW…QKERRMMLSR (511 aa). Residues 1126-1147 are disordered; the sequence is IPRSREETAAKRLKKDPNRGHG. Residues 1128–1144 show a composition bias toward basic and acidic residues; the sequence is RSREETAAKRLKKDPNR. Positions 1174–1386 form a coiled coil; it reads EENYRLRSEL…LDVLRELHRQ (213 aa).

It belongs to the CEP162 family. Interacts with CPNE4. Interacts with alpha-tubulin. Interacts with CEP290.

The protein resides in the cytoplasm. Its subcellular location is the cytoskeleton. It localises to the microtubule organizing center. It is found in the centrosome. The protein localises to the centriole. The protein resides in the spindle. Its subcellular location is the nucleus. Its function is as follows. Required to promote assembly of the transition zone in primary cilia. Acts by specifically recognizing and binding the axonemal microtubule. Localizes to the distal ends of centrioles before ciliogenesis and directly binds to axonemal microtubule, thereby promoting and restricting transition zone formation specifically at the cilia base. Required to mediate CEP290 association with microtubules. This chain is Centrosomal protein of 162 kDa (Cep162), found in Mus musculus (Mouse).